A 240-amino-acid polypeptide reads, in one-letter code: 6-phosphogluconolactonase (240 aa).

Belongs to the glucosamine/galactosamine-6-phosphate isomerase family. 6-phosphogluconolactonase subfamily.

It carries out the reaction 6-phospho-D-glucono-1,5-lactone + H2O = 6-phospho-D-gluconate + H(+). Its pathway is carbohydrate degradation; pentose phosphate pathway; D-ribulose 5-phosphate from D-glucose 6-phosphate (oxidative stage): step 2/3. In terms of biological role, hydrolysis of 6-phosphogluconolactone to 6-phosphogluconate. This is 6-phosphogluconolactonase (pgl) from Synechocystis sp. (strain ATCC 27184 / PCC 6803 / Kazusa).